Reading from the N-terminus, the 257-residue chain is Thiazole synthase (257 aa).

Lysine 98 serves as the catalytic Schiff-base intermediate with DXP. Residues glycine 159, 185-186, and 207-208 contribute to the 1-deoxy-D-xylulose 5-phosphate site; these read AG and NT.

It belongs to the ThiG family. In terms of assembly, homotetramer. Forms heterodimers with either ThiH or ThiS.

Its subcellular location is the cytoplasm. It carries out the reaction [ThiS sulfur-carrier protein]-C-terminal-Gly-aminoethanethioate + 2-iminoacetate + 1-deoxy-D-xylulose 5-phosphate = [ThiS sulfur-carrier protein]-C-terminal Gly-Gly + 2-[(2R,5Z)-2-carboxy-4-methylthiazol-5(2H)-ylidene]ethyl phosphate + 2 H2O + H(+). The protein operates within cofactor biosynthesis; thiamine diphosphate biosynthesis. Catalyzes the rearrangement of 1-deoxy-D-xylulose 5-phosphate (DXP) to produce the thiazole phosphate moiety of thiamine. Sulfur is provided by the thiocarboxylate moiety of the carrier protein ThiS. In vitro, sulfur can be provided by H(2)S. The protein is Thiazole synthase of Anaeromyxobacter dehalogenans (strain 2CP-1 / ATCC BAA-258).